The primary structure comprises 641 residues: MRSTSTFTRTPAFLLHTLARWLLVWGVLGSSVVAEKKCASNYYVRSLPGQPDGPLLKMHAGHVEVDHKNNGNLFFWHFQNRHIANRQRTVIWLNGGPGCSSMDGALMEIGPYRLKDDHTLIYNEGSWDEFANILFVDQPVGTGFSYVNTNSYIHELDEMASHFVTFLEKWFELFPEYEHDDLYFAGESYAGQYIPYIAKAILDRNKNTTTQAQSRLWNLKGLLIGNGWISPVEQYQAYLTYAYKENLIQSGTDAAKRVERAHSECISELDSGGKDRIHAGACEKVLSAVLEVTRENGKCINMYDIRLRDEFPSCGMNWPPDLKHITPYLRRDDVISALHVNDDKRTGWRECTGAVSSNFNARNSKPSVQLLPEILESGIPITLFSGAKDFICNHIGTEQFIHNMQWSGGTGFELSPGVWAPRHDWTFEGEAAGYYQEARNLTYVLFYNASHMVPFDFGRRSRDMLDRFLGVDITSIGGNPADSRIDGEKGALTSVGNHPNSTTAEQREKEKLKAATWAAYYKSGEVALVVVAIAAAVWGFFIWRSRRQRQGSGYRGIYPNLNGLSSGSFSGFRNKRSSHDDIEAAADFDASELDTLRGTDDRSRGANGHGSVGGDSEDEDEKFGAQKESYHPSNMPSSSSS.

Positions 1–34 (MRSTSTFTRTPAFLLHTLARWLLVWGVLGSSVVA) are cleaved as a signal peptide. The Lumenal portion of the chain corresponds to 35-522 (EKKCASNYYV…KAATWAAYYK (488 aa)). Ser188 is a catalytic residue. Asn207 carries N-linked (GlcNAc...) asparagine glycosylation. Asp389 is an active-site residue. Residues Asn440 and Asn448 are each glycosylated (N-linked (GlcNAc...) asparagine). The active site involves His451. The segment at 486–506 (DGEKGALTSVGNHPNSTTAEQ) is disordered. The segment covering 494–504 (SVGNHPNSTTA) has biased composition (polar residues). Residue Asn500 is glycosylated (N-linked (GlcNAc...) asparagine). A helical membrane pass occupies residues 523–543 (SGEVALVVVAIAAAVWGFFIW). The Cytoplasmic segment spans residues 544–641 (RSRRQRQGSG…PSNMPSSSSS (98 aa)). The disordered stretch occupies residues 593–641 (LDTLRGTDDRSRGANGHGSVGGDSEDEDEKFGAQKESYHPSNMPSSSSS). Positions 594-604 (DTLRGTDDRSR) are enriched in basic and acidic residues. The span at 631 to 641 (HPSNMPSSSSS) shows a compositional bias: polar residues.

This sequence belongs to the peptidase S10 family.

The protein resides in the golgi apparatus. It is found in the trans-Golgi network membrane. It carries out the reaction Preferential release of a C-terminal arginine or lysine residue.. Functionally, protease with a carboxypeptidase B-like function involved in the C-terminal processing of the lysine and arginine residues from protein precursors. Promotes cell fusion and is involved in the programmed cell death. The chain is Pheromone-processing carboxypeptidase KEX1 (KEX1) from Coccidioides posadasii (strain C735) (Valley fever fungus).